A 920-amino-acid chain; its full sequence is Protein translocase subunit SecA (920 aa).

Residues Q85, 103-107 (GEGKT), and D514 each bind ATP. The Zn(2+) site is built by C904, C906, C915, and H916.

It belongs to the SecA family. Monomer and homodimer. Part of the essential Sec protein translocation apparatus which comprises SecA, SecYEG and auxiliary proteins SecDF-YajC and YidC. Requires Zn(2+) as cofactor.

It localises to the cell inner membrane. It is found in the cytoplasm. The enzyme catalyses ATP + H2O + cellular proteinSide 1 = ADP + phosphate + cellular proteinSide 2.. Its function is as follows. Part of the Sec protein translocase complex. Interacts with the SecYEG preprotein conducting channel. Has a central role in coupling the hydrolysis of ATP to the transfer of proteins into and across the cell membrane, serving both as a receptor for the preprotein-SecB complex and as an ATP-driven molecular motor driving the stepwise translocation of polypeptide chains across the membrane. The sequence is that of Protein translocase subunit SecA from Janthinobacterium sp. (strain Marseille) (Minibacterium massiliensis).